Reading from the N-terminus, the 291-residue chain is Ribosomal RNA small subunit methyltransferase H (291 aa).

Residues glycine 36–histidine 38, aspartate 55, leucine 88, aspartate 102, and glutamine 109 contribute to the S-adenosyl-L-methionine site. The interval lysine 268–isoleucine 291 is disordered.

This sequence belongs to the methyltransferase superfamily. RsmH family.

The protein localises to the cytoplasm. It carries out the reaction cytidine(1402) in 16S rRNA + S-adenosyl-L-methionine = N(4)-methylcytidine(1402) in 16S rRNA + S-adenosyl-L-homocysteine + H(+). In terms of biological role, specifically methylates the N4 position of cytidine in position 1402 (C1402) of 16S rRNA. The chain is Ribosomal RNA small subunit methyltransferase H from Thermosipho melanesiensis (strain DSM 12029 / CIP 104789 / BI429).